The primary structure comprises 78 residues: Cytochrome b-c1 complex subunit 10, mitochondrial (78 aa).

Over 1–26 (MVSYVKGPAYKALSHFGKLNAPLVRS) the chain is Mitochondrial matrix. The helical transmembrane segment at 27 to 46 (YIPNLVFWGAAAGGAVATFT) threads the bilayer. The Mitochondrial intermembrane portion of the chain corresponds to 47–78 (EGVPLFQKTFYEKIPFFGQHWIYNPDPEDVPV).

The protein belongs to the UQCR11/QCR10 family. As to quaternary structure, component of the ubiquinol-cytochrome c oxidoreductase (cytochrome b-c1 complex, complex III, CIII), a multisubunit enzyme composed of 10 subunits. The complex is composed of 3 respiratory subunits cytochrome b (COB), cytochrome c1 (CYT1) and Rieske protein (RIP1), 2 core protein subunits COR1 and QCR2, and 5 low-molecular weight protein subunits QCR6, QCR7, QCR8, QCR9 and QCR10. The complex exists as an obligatory dimer and forms supercomplexes (SCs) in the inner mitochondrial membrane with a monomer or a dimer of cytochrome c oxidase (complex IV, CIV), resulting in 2 different assemblies (supercomplexes III(2)IV and III(2)IV(2)).

The protein resides in the mitochondrion inner membrane. Component of the ubiquinol-cytochrome c oxidoreductase, a multisubunit transmembrane complex that is part of the mitochondrial electron transport chain which drives oxidative phosphorylation. The complex plays an important role in the uptake of multiple carbon sources present in different host niches. The polypeptide is Cytochrome b-c1 complex subunit 10, mitochondrial (Candida albicans (strain SC5314 / ATCC MYA-2876) (Yeast)).